We begin with the raw amino-acid sequence, 269 residues long: Tryptophan synthase alpha chain (269 aa).

Residues Glu49 and Asp60 each act as proton acceptor in the active site.

Belongs to the TrpA family. In terms of assembly, tetramer of two alpha and two beta chains.

The catalysed reaction is (1S,2R)-1-C-(indol-3-yl)glycerol 3-phosphate + L-serine = D-glyceraldehyde 3-phosphate + L-tryptophan + H2O. It functions in the pathway amino-acid biosynthesis; L-tryptophan biosynthesis; L-tryptophan from chorismate: step 5/5. Functionally, the alpha subunit is responsible for the aldol cleavage of indoleglycerol phosphate to indole and glyceraldehyde 3-phosphate. This chain is Tryptophan synthase alpha chain, found in Cronobacter sakazakii (strain ATCC BAA-894) (Enterobacter sakazakii).